Here is a 129-residue protein sequence, read N- to C-terminus: Follitropin subunit beta (129 aa).

The first 18 residues, 1–18, serve as a signal peptide directing secretion; sequence MKSIQFCFFFCCWKAICC. 6 disulfides stabilise this stretch: C21–C69, C35–C84, C38–C122, C46–C100, C50–C102, and C105–C112. N-linked (GlcNAc...) asparagine glycosylation is found at N25 and N42.

It belongs to the glycoprotein hormones subunit beta family. As to quaternary structure, heterodimer. The active follitropin is a heterodimer composed of an alpha chain/CGA shared with other hormones and a unique beta chain/FSHB shown here.

It is found in the secreted. Its function is as follows. Together with the alpha chain CGA constitutes follitropin, the follicle-stimulating hormone, and provides its biological specificity to the hormone heterodimer. Binds FSHR, a G protein-coupled receptor, on target cells to activate downstream signaling pathways. Follitropin is involved in follicle development and spermatogenesis in reproductive organs. The sequence is that of Follitropin subunit beta (FSHB) from Cavia porcellus (Guinea pig).